The following is a 392-amino-acid chain: Chalcone synthase 1 (392 aa).

The active site involves Cys167.

This sequence belongs to the thiolase-like superfamily. Chalcone/stilbene synthases family.

The enzyme catalyses (E)-4-coumaroyl-CoA + 3 malonyl-CoA + 3 H(+) = 2',4,4',6'-tetrahydroxychalcone + 3 CO2 + 4 CoA. The protein operates within secondary metabolite biosynthesis; flavonoid biosynthesis. In terms of biological role, the primary product of this enzyme is 4,2',4',6'-tetrahydroxychalcone (also termed naringenin-chalcone or chalcone) which can under specific conditions spontaneously isomerize into naringenin. The polypeptide is Chalcone synthase 1 (CHS1) (Secale cereale (Rye)).